Reading from the N-terminus, the 637-residue chain is Coiled-coil domain-containing protein 22 homolog (637 aa).

Coiled-coil stretches lie at residues 322 to 489 and 608 to 637; these read ETEI…YKQA and SDRV…ETKN.

It belongs to the CCDC22 family.

The protein is Coiled-coil domain-containing protein 22 homolog of Dictyostelium discoideum (Social amoeba).